The chain runs to 330 residues: Putative 4-hydroxythreonine-4-phosphate dehydrogenase (330 aa).

The a divalent metal cation site is built by histidine 169, histidine 213, and histidine 263.

This sequence belongs to the PdxA family. In terms of assembly, homodimer. The cofactor is Zn(2+). Mg(2+) serves as cofactor. It depends on Co(2+) as a cofactor.

It is found in the cytoplasm. The catalysed reaction is 4-(phosphooxy)-L-threonine + NAD(+) = 3-amino-2-oxopropyl phosphate + CO2 + NADH. Its pathway is cofactor biosynthesis; pyridoxine 5'-phosphate biosynthesis; pyridoxine 5'-phosphate from D-erythrose 4-phosphate: step 4/5. Its function is as follows. Catalyzes the NAD(P)-dependent oxidation of 4-(phosphooxy)-L-threonine (HTP) into 2-amino-3-oxo-4-(phosphooxy)butyric acid which spontaneously decarboxylates to form 3-amino-2-oxopropyl phosphate (AHAP). The polypeptide is Putative 4-hydroxythreonine-4-phosphate dehydrogenase (Novosphingobium aromaticivorans (Sphingomonas aromaticivorans)).